The chain runs to 223 residues: Putative 3-methyladenine DNA glycosylase (223 aa).

This sequence belongs to the DNA glycosylase MPG family.

The protein is Putative 3-methyladenine DNA glycosylase of Rickettsia typhi (strain ATCC VR-144 / Wilmington).